A 376-amino-acid polypeptide reads, in one-letter code: NADPH oxidase organizer 1 (376 aa).

A PX domain is found at 1–131 (MAGPRYPVSV…GFFAPQPLDL (131 aa)). 2 SH3 domains span residues 163–225 (LEAQ…EAAP) and 237–296 (SSGP…PEGL). The segment at 302–376 (GTGFRGGDDP…DSVPHPTTEQ (75 aa)) is disordered. Positions 326 to 335 (APPPTVPTRP) are enriched in pro residues. The tract at residues 328-337 (PPTVPTRPSP) is proline-rich region; mediates mutually exclusive interactions with itself and NOXA1.

In terms of assembly, interacts with NOX1, NOXA1, CYBA/p22phox and NCF2/p67phox. Interacts with SH3PXD2A and SH3PXD2B. As to expression, expressed in testis, small and large intestines, liver, kidney and pancreas. Isoform 3 is mainly expressed in colon. Isoform 1 is preferentially expressed in testis.

It localises to the cell membrane. In terms of biological role, constitutively potentiates the superoxide-generating activity of NOX1 and NOX3 and is required for the biogenesis of otoconia/otolith, which are crystalline structures of the inner ear involved in the perception of gravity. Isoform 3 is more potent than isoform 1 in activating NOX3. Together with NOXA1, may also substitute to NCF1/p47phox and NCF2/p67phox in supporting the phagocyte NOX2/gp91phox superoxide-generating activity. The sequence is that of NADPH oxidase organizer 1 (NOXO1) from Homo sapiens (Human).